Here is a 301-residue protein sequence, read N- to C-terminus: Light-independent protochlorophyllide reductase iron-sulfur ATP-binding protein (301 aa).

A disordered region spans residues 1 to 26; sequence MSNGSVPVSGIGGRGDGEGSSQVHME. Residues 44–49 and lysine 73 contribute to the ATP site; that span reads GIGKST. Serine 48 contributes to the Mg(2+) binding site. Cysteine 129 and cysteine 163 together coordinate [4Fe-4S] cluster. 214–215 provides a ligand contact to ATP; the sequence is NR.

This sequence belongs to the NifH/BchL/ChlL family. As to quaternary structure, homodimer. Protochlorophyllide reductase is composed of three subunits; BchL, BchN and BchB. [4Fe-4S] cluster is required as a cofactor.

It catalyses the reaction chlorophyllide a + oxidized 2[4Fe-4S]-[ferredoxin] + 2 ADP + 2 phosphate = protochlorophyllide a + reduced 2[4Fe-4S]-[ferredoxin] + 2 ATP + 2 H2O. It participates in porphyrin-containing compound metabolism; bacteriochlorophyll biosynthesis (light-independent). In terms of biological role, component of the dark-operative protochlorophyllide reductase (DPOR) that uses Mg-ATP and reduced ferredoxin to reduce ring D of protochlorophyllide (Pchlide) to form chlorophyllide a (Chlide). This reaction is light-independent. The L component serves as a unique electron donor to the NB-component of the complex, and binds Mg-ATP. The protein is Light-independent protochlorophyllide reductase iron-sulfur ATP-binding protein of Halorhodospira halophila (strain DSM 244 / SL1) (Ectothiorhodospira halophila (strain DSM 244 / SL1)).